The sequence spans 237 residues: MNARQKPAPVITIDGPSGSGKGTIAFRIAQTLNWYLLDSGIIYRAIAWAMAHYKVPLEDSAGLARLLKRVQISIENRILGKKAKISCDGHDITLAIRSEECGALASRASALPIVREAVLQYQRDFRQRPGLVADGRDMGTVVFPDAVLKFYFDADSQQRAYRRYKELQDRGINVSLPDIQEDLEERDRRDITRSISPTKPAEDAVIIDTTHLSIEAVFATVMNHVRQRGLANVANEK.

15 to 23 (GPSGSGKGT) is a binding site for ATP.

Belongs to the cytidylate kinase family. Type 1 subfamily.

It localises to the cytoplasm. It carries out the reaction CMP + ATP = CDP + ADP. The catalysed reaction is dCMP + ATP = dCDP + ADP. This chain is Cytidylate kinase, found in Coxiella burnetii (strain RSA 493 / Nine Mile phase I).